Here is a 340-residue protein sequence, read N- to C-terminus: Anthranilate phosphoribosyltransferase (340 aa).

Residues glycine 84, 87–88 (GD), threonine 92, 94–97 (NIST), 112–120 (KHGSRSVSS), and serine 124 contribute to the 5-phospho-alpha-D-ribose 1-diphosphate site. Anthranilate is bound at residue glycine 84. Mg(2+) is bound at residue serine 96. Residue arginine 170 coordinates anthranilate. Residues aspartate 228 and glutamate 229 each coordinate Mg(2+).

Belongs to the anthranilate phosphoribosyltransferase family. As to quaternary structure, homodimer. The cofactor is Mg(2+).

The enzyme catalyses N-(5-phospho-beta-D-ribosyl)anthranilate + diphosphate = 5-phospho-alpha-D-ribose 1-diphosphate + anthranilate. It participates in amino-acid biosynthesis; L-tryptophan biosynthesis; L-tryptophan from chorismate: step 2/5. Its function is as follows. Catalyzes the transfer of the phosphoribosyl group of 5-phosphorylribose-1-pyrophosphate (PRPP) to anthranilate to yield N-(5'-phosphoribosyl)-anthranilate (PRA). The sequence is that of Anthranilate phosphoribosyltransferase from Psychromonas ingrahamii (strain DSM 17664 / CCUG 51855 / 37).